Consider the following 356-residue polypeptide: Protein RecA (356 aa).

Residue 67–74 (GPESSGKT) coordinates ATP.

This sequence belongs to the RecA family.

The protein localises to the cytoplasm. In terms of biological role, can catalyze the hydrolysis of ATP in the presence of single-stranded DNA, the ATP-dependent uptake of single-stranded DNA by duplex DNA, and the ATP-dependent hybridization of homologous single-stranded DNAs. It interacts with LexA causing its activation and leading to its autocatalytic cleavage. The sequence is that of Protein RecA from Yersinia pestis (strain Pestoides F).